A 343-amino-acid polypeptide reads, in one-letter code: tRNA N6-adenosine threonylcarbamoyltransferase (343 aa).

Residues His120 and His124 each coordinate Fe cation. Residues 142–146 (VVSGG), Asp175, Gly188, Asp192, and Asn281 contribute to the substrate site. Asp310 is a Fe cation binding site.

The protein belongs to the KAE1 / TsaD family. Fe(2+) is required as a cofactor.

The protein resides in the cytoplasm. It catalyses the reaction L-threonylcarbamoyladenylate + adenosine(37) in tRNA = N(6)-L-threonylcarbamoyladenosine(37) in tRNA + AMP + H(+). In terms of biological role, required for the formation of a threonylcarbamoyl group on adenosine at position 37 (t(6)A37) in tRNAs that read codons beginning with adenine. Is involved in the transfer of the threonylcarbamoyl moiety of threonylcarbamoyl-AMP (TC-AMP) to the N6 group of A37, together with TsaE and TsaB. TsaD likely plays a direct catalytic role in this reaction. In Bacillus thuringiensis (strain Al Hakam), this protein is tRNA N6-adenosine threonylcarbamoyltransferase.